The primary structure comprises 419 residues: UDP-N-acetylglucosamine 1-carboxyvinyltransferase 2 (419 aa).

Phosphoenolpyruvate is bound at residue 22 to 23 (KN). Residue R92 participates in UDP-N-acetyl-alpha-D-glucosamine binding. The active-site Proton donor is D116. UDP-N-acetyl-alpha-D-glucosamine-binding positions include 121–125 (RPIDQ), D306, and L328.

This sequence belongs to the EPSP synthase family. MurA subfamily.

It is found in the cytoplasm. It catalyses the reaction phosphoenolpyruvate + UDP-N-acetyl-alpha-D-glucosamine = UDP-N-acetyl-3-O-(1-carboxyvinyl)-alpha-D-glucosamine + phosphate. It participates in cell wall biogenesis; peptidoglycan biosynthesis. Functionally, cell wall formation. Adds enolpyruvyl to UDP-N-acetylglucosamine. This chain is UDP-N-acetylglucosamine 1-carboxyvinyltransferase 2, found in Latilactobacillus sakei subsp. sakei (strain 23K) (Lactobacillus sakei subsp. sakei).